Consider the following 127-residue polypeptide: PRA1 family protein C (127 aa).

3 helical membrane passes run 15 to 35, 53 to 73, and 76 to 96; these read IFISMLWQPVHLSVFVILIVA, VIDDSTLVLVLLVLTIGIFLL, and VSRGIVIGVLAGLPVVLVHGM.

The protein belongs to the PRA1 family.

The protein resides in the endoplasmic reticulum membrane. May be involved in both secretory and endocytic intracellular trafficking in the endosomal/prevacuolar compartments. The chain is PRA1 family protein C (PRA1C) from Arabidopsis thaliana (Mouse-ear cress).